Consider the following 468-residue polypeptide: Ribulose bisphosphate carboxylase large chain (468 aa).

The residue at position 5 (Lys5) is an N6,N6,N6-trimethyllysine. Asn114 and Thr164 together coordinate substrate. The Proton acceptor role is filled by Lys166. Residue Lys168 participates in substrate binding. Residues Lys192, Asp194, and Glu195 each contribute to the Mg(2+) site. Lys192 carries the N6-carboxylysine modification. The active-site Proton acceptor is the His285. Arg286, His318, and Ser370 together coordinate substrate.

The protein belongs to the RuBisCO large chain family. Type I subfamily. In terms of assembly, heterohexadecamer of 8 large chains and 8 small chains; disulfide-linked. The disulfide link is formed within the large subunit homodimers. Mg(2+) is required as a cofactor. The disulfide bond which can form in the large chain dimeric partners within the hexadecamer appears to be associated with oxidative stress and protein turnover.

The protein resides in the plastid. Its subcellular location is the chloroplast. It catalyses the reaction 2 (2R)-3-phosphoglycerate + 2 H(+) = D-ribulose 1,5-bisphosphate + CO2 + H2O. The enzyme catalyses D-ribulose 1,5-bisphosphate + O2 = 2-phosphoglycolate + (2R)-3-phosphoglycerate + 2 H(+). Its function is as follows. RuBisCO catalyzes two reactions: the carboxylation of D-ribulose 1,5-bisphosphate, the primary event in carbon dioxide fixation, as well as the oxidative fragmentation of the pentose substrate in the photorespiration process. Both reactions occur simultaneously and in competition at the same active site. The protein is Ribulose bisphosphate carboxylase large chain of Catesbaea spinosa.